Reading from the N-terminus, the 94-residue chain is Host-modulation protein 11K (94 aa).

As to quaternary structure, interacts with host GRB2; this interaction alters host cell environment by modulating host signaling pathways.

It localises to the host cytoplasm. Functionally, enhances viral DNA replication and virion release. Mechansitically, optimizes viral DNA replication by interacting with host GRB2 to inhibit the negative effect of ERK signaling on B19 viral replication. Plays a role in viral infectivity. Induces apoptosis of primary erythroid progenitor cells. This chain is Host-modulation protein 11K (11K), found in Human parvovirus B19 (strain HV) (HPV B19).